Reading from the N-terminus, the 216-residue chain is Redox-sensing transcriptional repressor Rex 1 (216 aa).

The H-T-H motif DNA-binding region spans 16 to 55; it reads LYYRYLRMLHDTGKNKVSSTELSEAVQVDSATIRRDFSYF. 90–95 lines the NAD(+) pocket; sequence GVGNLG.

Belongs to the transcriptional regulatory Rex family. Homodimer.

The protein localises to the cytoplasm. Functionally, modulates transcription in response to changes in cellular NADH/NAD(+) redox state. The sequence is that of Redox-sensing transcriptional repressor Rex 1 from Enterococcus faecalis (strain ATCC 700802 / V583).